Consider the following 421-residue polypeptide: Protein MucB (421 aa).

Residues 2 to 187 (FALIDVNGMY…LPVAEVWGVG (186 aa)) form the UmuC domain.

Belongs to the DNA polymerase type-Y family.

Functionally, involved in UV protection and mutation. The polypeptide is Protein MucB (mucB) (Salmonella typhimurium).